The sequence spans 328 residues: Phosphate acetyltransferase (328 aa).

It belongs to the phosphate acetyltransferase and butyryltransferase family.

The protein resides in the cytoplasm. The catalysed reaction is acetyl-CoA + phosphate = acetyl phosphate + CoA. It participates in metabolic intermediate biosynthesis; acetyl-CoA biosynthesis; acetyl-CoA from acetate: step 2/2. This is Phosphate acetyltransferase (pta) from Staphylococcus aureus (strain COL).